The following is a 285-amino-acid chain: 2-dehydro-3-deoxyphosphooctonate aldolase (285 aa).

It belongs to the KdsA family.

Its subcellular location is the cytoplasm. The enzyme catalyses D-arabinose 5-phosphate + phosphoenolpyruvate + H2O = 3-deoxy-alpha-D-manno-2-octulosonate-8-phosphate + phosphate. It functions in the pathway carbohydrate biosynthesis; 3-deoxy-D-manno-octulosonate biosynthesis; 3-deoxy-D-manno-octulosonate from D-ribulose 5-phosphate: step 2/3. Its pathway is bacterial outer membrane biogenesis; lipopolysaccharide biosynthesis. The chain is 2-dehydro-3-deoxyphosphooctonate aldolase from Acidovorax sp. (strain JS42).